The chain runs to 318 residues: L-lactate dehydrogenase (318 aa).

Residues Val-15, Asp-36, and Lys-41 each contribute to the NAD(+) site. Arg-89 contacts substrate. NAD(+) is bound by residues Ser-102, 119-121 (ITN), and Thr-144. Position 121–124 (121–124 (NPVD)) interacts with substrate. Residue 149-152 (DSAR) participates in substrate binding. Catalysis depends on His-176, which acts as the Proton acceptor. Residue Thr-231 coordinates substrate.

It belongs to the LDH/MDH superfamily. LDH family. As to quaternary structure, homotetramer.

It is found in the cytoplasm. It catalyses the reaction (S)-lactate + NAD(+) = pyruvate + NADH + H(+). It functions in the pathway fermentation; pyruvate fermentation to lactate; (S)-lactate from pyruvate: step 1/1. Catalyzes the conversion of lactate to pyruvate. This chain is L-lactate dehydrogenase, found in Fusobacterium nucleatum subsp. nucleatum (strain ATCC 25586 / DSM 15643 / BCRC 10681 / CIP 101130 / JCM 8532 / KCTC 2640 / LMG 13131 / VPI 4355).